The sequence spans 442 residues: ATP-dependent protease ATPase subunit HslU (442 aa).

ATP is bound by residues I18, G60 to E65, D255, E320, and R392.

The protein belongs to the ClpX chaperone family. HslU subfamily. In terms of assembly, a double ring-shaped homohexamer of HslV is capped on each side by a ring-shaped HslU homohexamer. The assembly of the HslU/HslV complex is dependent on binding of ATP.

It is found in the cytoplasm. In terms of biological role, ATPase subunit of a proteasome-like degradation complex; this subunit has chaperone activity. The binding of ATP and its subsequent hydrolysis by HslU are essential for unfolding of protein substrates subsequently hydrolyzed by HslV. HslU recognizes the N-terminal part of its protein substrates and unfolds these before they are guided to HslV for hydrolysis. In Hahella chejuensis (strain KCTC 2396), this protein is ATP-dependent protease ATPase subunit HslU.